The following is a 239-amino-acid chain: Phosphoribosylaminoimidazole-succinocarboxamide synthase (239 aa).

The protein belongs to the SAICAR synthetase family.

It carries out the reaction 5-amino-1-(5-phospho-D-ribosyl)imidazole-4-carboxylate + L-aspartate + ATP = (2S)-2-[5-amino-1-(5-phospho-beta-D-ribosyl)imidazole-4-carboxamido]succinate + ADP + phosphate + 2 H(+). It functions in the pathway purine metabolism; IMP biosynthesis via de novo pathway; 5-amino-1-(5-phospho-D-ribosyl)imidazole-4-carboxamide from 5-amino-1-(5-phospho-D-ribosyl)imidazole-4-carboxylate: step 1/2. This is Phosphoribosylaminoimidazole-succinocarboxamide synthase from Brevibacillus brevis (strain 47 / JCM 6285 / NBRC 100599).